The primary structure comprises 540 residues: 2-isopropylmalate synthase (540 aa).

Residues 8-269 (VLIFDTTLRD…YFNPFFGRAE (262 aa)) form the Pyruvate carboxyltransferase domain. Mn(2+) is bound by residues aspartate 17, histidine 208, histidine 210, and asparagine 244. Positions 408-540 (QLKLVQVSCG…ATPLDASPTL (133 aa)) are regulatory domain.

This sequence belongs to the alpha-IPM synthase/homocitrate synthase family. LeuA type 1 subfamily. As to quaternary structure, homodimer. Requires Mn(2+) as cofactor.

It localises to the cytoplasm. The enzyme catalyses 3-methyl-2-oxobutanoate + acetyl-CoA + H2O = (2S)-2-isopropylmalate + CoA + H(+). Its pathway is amino-acid biosynthesis; L-leucine biosynthesis; L-leucine from 3-methyl-2-oxobutanoate: step 1/4. Functionally, catalyzes the condensation of the acetyl group of acetyl-CoA with 3-methyl-2-oxobutanoate (2-ketoisovalerate) to form 3-carboxy-3-hydroxy-4-methylpentanoate (2-isopropylmalate). This is 2-isopropylmalate synthase from Synechococcus sp. (strain WH7803).